A 177-amino-acid polypeptide reads, in one-letter code: Large ribosomal subunit protein uL6 (177 aa).

It belongs to the universal ribosomal protein uL6 family. Part of the 50S ribosomal subunit.

This protein binds to the 23S rRNA, and is important in its secondary structure. It is located near the subunit interface in the base of the L7/L12 stalk, and near the tRNA binding site of the peptidyltransferase center. The protein is Large ribosomal subunit protein uL6 of Shewanella baltica (strain OS223).